The following is a 197-amino-acid chain: Thymidylate kinase (197 aa).

Position 7–14 (7–14) interacts with ATP; that stretch reads GIDGCGKS.

It belongs to the thymidylate kinase family.

The catalysed reaction is dTMP + ATP = dTDP + ADP. Phosphorylation of dTMP to form dTDP in both de novo and salvage pathways of dTTP synthesis. The polypeptide is Thymidylate kinase (Fervidobacterium nodosum (strain ATCC 35602 / DSM 5306 / Rt17-B1)).